The sequence spans 351 residues: MNSLTATAPIRAAIPKSYMHIATRNYSGVIAMSGLRCSGSLVANRHQTAGKRFISTTPKSQIKEFFPPPTAPHVKEVETAWVHPVYTEEQMKQVAIAHRDAKNWADWVALGTVRMLRWGMDLVTGYRHPPPGREHEARFKMTEQKWLTRFIFLESVAGVPGMVGGMLRHLRSLRRMKRDNGWIETLLEEAYNERMHLLTFLKLAEPGWFMRLMVLGAQGVFFNGFFLSYLMSPRICHRFVGYLEEEAVITYTRAIKEIEAGSLPAWEKTEAPEIAVQYWKMPEGQRSMKDLLLYVRADEAKHREVNHTLGNLNQAIDPNPYAAKYKDPTKAHPNKGIADLKPTGWEREEVI.

The chain crosses the membrane as a helical span at residues 147 to 167 (LTRFIFLESVAGVPGMVGGML). 3 residues coordinate Fe cation: E154, E193, and H196. Residues 212–232 (LMVLGAQGVFFNGFFLSYLMS) form a helical membrane-spanning segment. Fe cation is bound by residues E244, E245, E299, and H302. Residues 322-351 (AAKYKDPTKAHPNKGIADLKPTGWEREEVI) form a disordered region.

The protein belongs to the alternative oxidase family. The cofactor is Fe cation.

Its subcellular location is the mitochondrion inner membrane. Its function is as follows. Catalyzes cyanide-resistant oxygen consumption. May increase respiration when the cytochrome respiratory pathway is restricted, or in response to low temperatures. The chain is Alternative oxidase, mitochondrial (aox1) from Aspergillus niger.